The sequence spans 404 residues: Cysteine desulfurase IscS (404 aa).

Pyridoxal 5'-phosphate-binding positions include 75-76 (AT), N155, Q183, and 203-205 (SAH). K206 is subject to N6-(pyridoxal phosphate)lysine. Pyridoxal 5'-phosphate is bound at residue T243. C328 acts as the Cysteine persulfide intermediate in catalysis. Position 328 (C328) interacts with [2Fe-2S] cluster.

It belongs to the class-V pyridoxal-phosphate-dependent aminotransferase family. NifS/IscS subfamily. In terms of assembly, homodimer. Forms a heterotetramer with IscU, interacts with other sulfur acceptors. It depends on pyridoxal 5'-phosphate as a cofactor.

The protein localises to the cytoplasm. The catalysed reaction is (sulfur carrier)-H + L-cysteine = (sulfur carrier)-SH + L-alanine. The protein operates within cofactor biosynthesis; iron-sulfur cluster biosynthesis. Master enzyme that delivers sulfur to a number of partners involved in Fe-S cluster assembly, tRNA modification or cofactor biosynthesis. Catalyzes the removal of elemental sulfur atoms from cysteine to produce alanine. Functions as a sulfur delivery protein for Fe-S cluster synthesis onto IscU, an Fe-S scaffold assembly protein, as well as other S acceptor proteins. The chain is Cysteine desulfurase IscS from Pseudomonas entomophila (strain L48).